A 311-amino-acid polypeptide reads, in one-letter code: E3 ubiquitin-protein ligase RNF126 (311 aa).

Ala-2 bears the N-acetylalanine mark. Residue Ser-5 is modified to Phosphoserine. Residues 5–100 (SPHPGRYFCH…FEIPTFPPGA (96 aa)) form a required for interaction with BAG6 region. Cys-13, Cys-16, Cys-29, and Cys-32 together coordinate Zn(2+). The C4-type zinc finger occupies 13–32 (CHCCSVEIVPRLPDYICPRC). Disordered regions lie at residues 42 to 64 (EETRSTENGSAPSTAPTDQSRPP) and 94 to 132 (PTFPPGAQADDGRDPESRRERDHPSRHRYGARQPRARLT). Over residues 47–61 (TENGSAPSTAPTDQS) the composition is skewed to polar residues. Basic and acidic residues predominate over residues 103–116 (DDGRDPESRRERDH). The segment covering 117–132 (PSRHRYGARQPRARLT) has biased composition (basic residues). The interval 200-304 (TGPPPADKEK…SSSSSSSPSN (105 aa)) is sufficient for interaction with AICDA. An RING-type zinc finger spans residues 229–270 (CPVCKDDYALGERVRQLPCNHLFHDGCIVPWLEQHDSCPVCR). The segment at 277 to 311 (NTATNPPGLTGVSFSSSSSSSSSSSPSNENATSNS) is disordered. Over residues 289–311 (SFSSSSSSSSSSSPSNENATSNS) the composition is skewed to low complexity.

As to quaternary structure, interacts with CCDC50, EGFR, FLT3 and SCAMP3. Interacts with BAG6 (via ubiquitin-like domain); required for BAG6-dependent ubiquitination of proteins mislocalized to the cytosol. Interacts with CDKN1A. Interacts with AICDA. Post-translationally, ubiquitinated. May undergo autoubiquitination. Highly expressed in liver and testis.

It localises to the cytoplasm. The protein localises to the nucleus. The catalysed reaction is S-ubiquitinyl-[E2 ubiquitin-conjugating enzyme]-L-cysteine + [acceptor protein]-L-lysine = [E2 ubiquitin-conjugating enzyme]-L-cysteine + N(6)-ubiquitinyl-[acceptor protein]-L-lysine.. Its pathway is protein modification; protein ubiquitination. Its function is as follows. E3 ubiquitin-protein ligase that mediates ubiquitination oF target proteins. Depending on the associated E2 ligase, mediates 'Lys-27'-, 'Lys-29'-, 'Lys-48'- and/or 'Lys-63'-linked polyubiquitination of substrates. Part of a BAG6-dependent quality control process ensuring that proteins of the secretory pathway that are mislocalized to the cytosol are degraded by the proteasome. Probably acts by providing the ubiquitin ligase activity associated with the BAG6 complex and be responsible for ubiquitination of the hydrophobic mislocalized proteins and their targeting to the proteasome. May also play a role in the endosomal recycling of IGF2R, the cation-independent mannose-6-phosphate receptor. May play a role in the endosomal sorting and degradation of several membrane receptors including EGFR, FLT3, MET and CXCR4, by mediating their ubiquitination. By ubiquitinating CDKN1A/p21 and targeting it for degradation, may also promote cell proliferation. May monoubiquitinate AICDA. Acts as a regulator of DNA repair by mediating 'Lys-27'- and 'Lys-29'-linked polyubiquitination of MRE11, thereby promoting the exonuclease activity of MRE11. The sequence is that of E3 ubiquitin-protein ligase RNF126 from Homo sapiens (Human).